A 130-amino-acid chain; its full sequence is Small ribosomal subunit protein uS9 (130 aa).

Belongs to the universal ribosomal protein uS9 family.

In Shewanella denitrificans (strain OS217 / ATCC BAA-1090 / DSM 15013), this protein is Small ribosomal subunit protein uS9.